Consider the following 126-residue polypeptide: Fatty acid-binding protein, liver (126 aa).

A2 is modified (N-acetylalanine).

This sequence belongs to the calycin superfamily. Fatty-acid binding protein (FABP) family. As to expression, liver.

It localises to the cytoplasm. Its function is as follows. Binds free fatty acids and their coenzyme A derivatives, bilirubin, and some other small molecules in the cytoplasm. May be involved in intracellular lipid transport this L-FABP binds only one fatty acid/molecule. Has more affinity for trans-parinaric acid than for cis-parinaric acid. The sequence is that of Fatty acid-binding protein, liver (fabp1) from Rhamdia sapo (South American catfish).